The chain runs to 378 residues: Spermidine/putrescine import ATP-binding protein PotA (378 aa).

Positions 18-248 (VQLAGIRKCF…PKNLFVAGFI (231 aa)) constitute an ABC transporter domain. 50–57 (GPSGCGKT) provides a ligand contact to ATP.

This sequence belongs to the ABC transporter superfamily. Spermidine/putrescine importer (TC 3.A.1.11.1) family. In terms of assembly, the complex is composed of two ATP-binding proteins (PotA), two transmembrane proteins (PotB and PotC) and a solute-binding protein (PotD).

It is found in the cell inner membrane. The catalysed reaction is ATP + H2O + polyamine-[polyamine-binding protein]Side 1 = ADP + phosphate + polyamineSide 2 + [polyamine-binding protein]Side 1.. In terms of biological role, part of the ABC transporter complex PotABCD involved in spermidine/putrescine import. Responsible for energy coupling to the transport system. The chain is Spermidine/putrescine import ATP-binding protein PotA from Shigella boydii serotype 4 (strain Sb227).